The sequence spans 339 residues: Tetraacyldisaccharide 4'-kinase (339 aa).

62–69 is an ATP binding site; that stretch reads VAGGTGKT.

This sequence belongs to the LpxK family.

The enzyme catalyses a lipid A disaccharide + ATP = a lipid IVA + ADP + H(+). Its pathway is glycolipid biosynthesis; lipid IV(A) biosynthesis; lipid IV(A) from (3R)-3-hydroxytetradecanoyl-[acyl-carrier-protein] and UDP-N-acetyl-alpha-D-glucosamine: step 6/6. Transfers the gamma-phosphate of ATP to the 4'-position of a tetraacyldisaccharide 1-phosphate intermediate (termed DS-1-P) to form tetraacyldisaccharide 1,4'-bis-phosphate (lipid IVA). The chain is Tetraacyldisaccharide 4'-kinase from Xylella fastidiosa (strain 9a5c).